Consider the following 696-residue polypeptide: Putative cyclic nucleotide-gated ion channel 13 (696 aa).

At 1–81 (MAFGRNNRVR…QGSFLQNWNK (81 aa)) the chain is on the cytoplasmic side. The tract at residues 45–65 (KPLSFGSHNKKRDSNSSTTTQ) is disordered. The chain crosses the membrane as a helical span at residues 82–102 (IFLFASVIALAIDPLFFYIPI). The Extracellular portion of the chain corresponds to 103 to 116 (VDGERHCLNLHRNL). A helical membrane pass occupies residues 117–137 (EIAASVLRTFIDAFYIIHIVF). Residues 138-170 (QFRTAYISPSSRVFGRGELVDDPKAIAIKYLSS) are Cytoplasmic-facing. A helical membrane pass occupies residues 171–191 (YFIIDLLSILPLPQLVVLAVI). The Extracellular portion of the chain corresponds to 192-204 (PNVNKPVSLITKD). Residues 205–225 (YLITVIFTQYIPRILRIYPLY) traverse the membrane as a helical segment. Residues 226–243 (TEVTRTSGIVTETAWAGA) lie on the Cytoplasmic side of the membrane. A helical transmembrane segment spans residues 244–264 (AWNLSLYMLASHVFGALWYLI). Residues 265 to 367 (SVEREDRCWR…GQNLNTSKFV (103 aa)) lie on the Extracellular side of the membrane. Residues 368–388 (GEIIFAVSICISGLVLFALLI) traverse the membrane as a helical segment. The Cytoplasmic portion of the chain corresponds to 389 to 696 (GNMQKYLEST…SEPDFSLRNP (308 aa)). A nucleoside 3',5'-cyclic phosphate-binding positions include 474–598 (LFEI…SKQL) and glutamate 545. A calmodulin-binding region spans residues 590–605 (FRRLHSKQLQHTFRFY). One can recognise an IQ domain in the interval 610–639 (RTWGASFIQAAWRRHCRRKLARSLTEEEDR). Residues 677–696 (NNLPLLPPKPSEPDFSLRNP) form a disordered region.

It belongs to the cyclic nucleotide-gated cation channel (TC 1.A.1.5) family. Homotetramer or heterotetramer.

The protein localises to the cell membrane. In terms of biological role, putative cyclic nucleotide-gated ion channel. This is Putative cyclic nucleotide-gated ion channel 13 (CNGC13) from Arabidopsis thaliana (Mouse-ear cress).